The following is a 165-amino-acid chain: Minor capsid protein VP2 (165 aa).

It belongs to the sapovirus VP2 family. As to quaternary structure, homooligomer. The portal-like structure consists in 12 copies of VP2. Interacts with capsid protein VP1.

Its subcellular location is the virion. The protein localises to the host cytoplasm. Minor structural protein that forms a portal-like structure at a unique three-fold axis of symmetry, following binding to the host receptor. The channel formed by VP2 may allow the delivery of the viral genome through the host endosomal membrane. This Homo sapiens (Human) protein is Minor capsid protein VP2.